A 246-amino-acid polypeptide reads, in one-letter code: Uridylate kinase (246 aa).

ATP is bound at residue K18–G21. G60 contacts UMP. Positions 61 and 65 each coordinate ATP. UMP contacts are provided by residues D80 and T141 to T148. The ATP site is built by T168, Q169, Y174, and D177.

It belongs to the UMP kinase family. Homohexamer.

Its subcellular location is the cytoplasm. It catalyses the reaction UMP + ATP = UDP + ADP. It functions in the pathway pyrimidine metabolism; CTP biosynthesis via de novo pathway; UDP from UMP (UMPK route): step 1/1. With respect to regulation, inhibited by UTP. Its function is as follows. Catalyzes the reversible phosphorylation of UMP to UDP. This Granulibacter bethesdensis (strain ATCC BAA-1260 / CGDNIH1) protein is Uridylate kinase.